A 105-amino-acid chain; its full sequence is Met repressor (105 aa).

It belongs to the MetJ family. Homodimer.

It is found in the cytoplasm. In terms of biological role, this regulatory protein, when combined with SAM (S-adenosylmethionine) represses the expression of the methionine regulon and of enzymes involved in SAM synthesis. This chain is Met repressor, found in Pectobacterium carotovorum subsp. carotovorum (strain PC1).